Here is an 85-residue protein sequence, read N- to C-terminus: 4-hydroxyphenylacetate decarboxylase small subunit (85 aa).

Positions 4, 7, 20, 34, 43, 46, 60, and 78 each coordinate [4Fe-4S] cluster.

It belongs to the HPA decarboxylase small subunit family. In terms of assembly, heterooctamer consisting of 4 large (HpdB) subunits and 4 small (HpdC) subunits, arranged as a tetramer of heterodimers. [4Fe-4S] cluster serves as cofactor.

It catalyses the reaction 4-hydroxyphenylacetate + H(+) = 4-methylphenol + CO2. It carries out the reaction 3,4-dihydroxyphenylacetate + H(+) = 4-methylcatechol + CO2. In terms of biological role, component of the HPA decarboxylase that decarboxylates phenylacetates with a hydroxyl group in the p-position. Active toward 4-hydroxyphenylacetate and 3,4-dihydroxyphenylacetate, forming 4-methylphenol and 4-methylcatechol, respectively. Is likely involved in the catabolism of aromatic amino acids such as tyrosine fermentation. 4-methylphenol (p-cresol) formation provides metabolic toxicity, which allows an active suppression of other microbes and may provide growth advantages for the producers in highly competitive environments. The small subunit is essential for enzymatic activity of HPA decarboxylase, and also seems to be involved in the regulation of the enzyme oligomeric state and catalytic activity. This Clostridioides difficile (strain 630) (Peptoclostridium difficile) protein is 4-hydroxyphenylacetate decarboxylase small subunit.